The primary structure comprises 335 residues: Holliday junction branch migration complex subunit RuvB (335 aa).

Residues 1-183 (MDERIISSET…FGVIDHLEFY (183 aa)) form a large ATPase domain (RuvB-L) region. ATP-binding positions include Leu-22, Arg-23, Gly-64, Lys-67, Thr-68, Thr-69, 130–132 (EDY), Arg-173, Tyr-183, and Arg-220. Thr-68 provides a ligand contact to Mg(2+). The segment at 184 to 254 (TEEQLTEIVL…LAKEALTLLQ (71 aa)) is small ATPAse domain (RuvB-S). The segment at 257 to 335 (PRGLDTIDQK…HLGISYEKEV (79 aa)) is head domain (RuvB-H). Positions 293, 312, and 317 each coordinate DNA.

Belongs to the RuvB family. As to quaternary structure, homohexamer. Forms an RuvA(8)-RuvB(12)-Holliday junction (HJ) complex. HJ DNA is sandwiched between 2 RuvA tetramers; dsDNA enters through RuvA and exits via RuvB. An RuvB hexamer assembles on each DNA strand where it exits the tetramer. Each RuvB hexamer is contacted by two RuvA subunits (via domain III) on 2 adjacent RuvB subunits; this complex drives branch migration. In the full resolvosome a probable DNA-RuvA(4)-RuvB(12)-RuvC(2) complex forms which resolves the HJ.

Its subcellular location is the cytoplasm. It catalyses the reaction ATP + H2O = ADP + phosphate + H(+). In terms of biological role, the RuvA-RuvB-RuvC complex processes Holliday junction (HJ) DNA during genetic recombination and DNA repair, while the RuvA-RuvB complex plays an important role in the rescue of blocked DNA replication forks via replication fork reversal (RFR). RuvA specifically binds to HJ cruciform DNA, conferring on it an open structure. The RuvB hexamer acts as an ATP-dependent pump, pulling dsDNA into and through the RuvAB complex. RuvB forms 2 homohexamers on either side of HJ DNA bound by 1 or 2 RuvA tetramers; 4 subunits per hexamer contact DNA at a time. Coordinated motions by a converter formed by DNA-disengaged RuvB subunits stimulates ATP hydrolysis and nucleotide exchange. Immobilization of the converter enables RuvB to convert the ATP-contained energy into a lever motion, pulling 2 nucleotides of DNA out of the RuvA tetramer per ATP hydrolyzed, thus driving DNA branch migration. The RuvB motors rotate together with the DNA substrate, which together with the progressing nucleotide cycle form the mechanistic basis for DNA recombination by continuous HJ branch migration. Branch migration allows RuvC to scan DNA until it finds its consensus sequence, where it cleaves and resolves cruciform DNA. In Listeria monocytogenes serotype 4b (strain CLIP80459), this protein is Holliday junction branch migration complex subunit RuvB.